Here is a 752-residue protein sequence, read N- to C-terminus: Glutamate carboxypeptidase 2 (752 aa).

Over 1 to 19 the chain is Cytoplasmic; that stretch reads MWNAQQDSDSAEALGRRQR. A Phosphoserine modification is found at serine 10. Residues 20–44 form a helical; Signal-anchor for type II membrane protein membrane-spanning segment; sequence WFCAGTLVLAFTGTFIIGFLFGWFI. The Extracellular portion of the chain corresponds to 45 to 752; it reads KPSNDSTSSV…AAAETLREVD (708 aa). Residues asparagine 48, asparagine 78, asparagine 123, asparagine 155, and asparagine 197 are each glycosylated (N-linked (GlcNAc...) asparagine). Arginine 212 and asparagine 259 together coordinate substrate. Ca(2+)-binding residues include threonine 271 and tyrosine 274. The segment at 276 to 589 is NAALADase; that stretch reads ANEYAYRHEF…QVRGAMVFEL (314 aa). N-linked (GlcNAc...) asparagine glycosylation occurs at asparagine 338. Residues histidine 379 and aspartate 389 each coordinate Zn(2+). Glutamate 426 serves as a coordination point for substrate. Glutamate 426 functions as the Nucleophile; for NAALADase activity in the catalytic mechanism. Glutamate 427 provides a ligand contact to Zn(2+). Positions 435 and 438 each coordinate Ca(2+). Aspartate 455 provides a ligand contact to Zn(2+). N-linked (GlcNAc...) asparagine glycans are attached at residues asparagine 461 and asparagine 478. Residues 519 to 520, asparagine 521, 536 to 538, tyrosine 554, and 554 to 555 contribute to the substrate site; these read SG, RAR, and YH. A Zn(2+)-binding site is contributed by histidine 555. Asparagine 615 is a glycosylation site (N-linked (GlcNAc...) asparagine). The active-site Charge relay system is serine 630. An N-linked (GlcNAc...) asparagine glycan is attached at asparagine 640. Residues aspartate 668 and histidine 691 each act as charge relay system in the active site. 701–702 is a substrate binding site; the sequence is KY.

This sequence belongs to the peptidase M28 family. M28B subfamily. Homodimer. It depends on Zn(2+) as a cofactor. Widely expressed throughout brain regions with highest levels in the hippocampus, dentate gyrus, priform cortex, choroid plexus of ventricles, pineal gland, anterior lobe of the pituitary gland and supraoptic nucleus. High levels also found in the cerebral cortex, substantia nigra, pontine nucleus and the granule cell layer of cerebellum. Highly expressed in astrocytes and non-myelinating Schwann cells. Also expressed in kidney, localizing to the proximal brush border of the renal tube.

The protein resides in the cell membrane. It carries out the reaction Release of an unsubstituted, C-terminal glutamyl residue, typically from Ac-Asp-Glu or folylpoly-gamma-glutamates.. Its activity is regulated as follows. The NAALADase activity is inhibited by beta-NAAG, quisqualic acid and 2-(phosphonomethyl)glutaric acid (PMG). Functionally, has both folate hydrolase and N-acetylated-alpha-linked-acidic dipeptidase (NAALADase) activity. Has a preference for tri-alpha-glutamate peptides. In the intestine, required for the uptake of folate. In the brain, modulates excitatory neurotransmission through the hydrolysis of the neuropeptide, N-aceylaspartylglutamate (NAAG), thereby releasing glutamate. Its function is as follows. Also exhibits a dipeptidyl-peptidase IV type activity. In vitro, cleaves Gly-Pro-AMC. The sequence is that of Glutamate carboxypeptidase 2 (Folh1) from Rattus norvegicus (Rat).